The following is a 391-amino-acid chain: Mannose-6-phosphate isomerase (391 aa).

Zn(2+)-binding residues include Gln-97, His-99, Glu-134, and His-255. Arg-274 is a catalytic residue. The residue at position 280 (Lys-280) is an N6-acetyllysine.

The protein belongs to the mannose-6-phosphate isomerase type 1 family. The cofactor is Zn(2+).

The protein resides in the cytoplasm. The enzyme catalyses D-mannose 6-phosphate = D-fructose 6-phosphate. Involved in the conversion of glucose to GDP-L-fucose, which can be converted to L-fucose, a capsular polysaccharide. This Escherichia coli (strain K12) protein is Mannose-6-phosphate isomerase (manA).